Reading from the N-terminus, the 298-residue chain is Nucleotide-binding protein MLBr00563 (298 aa).

An ATP-binding site is contributed by glycine 21–glycine 28. GTP is bound at residue aspartate 72 to serine 75.

It belongs to the RapZ-like family.

Functionally, displays ATPase and GTPase activities. The sequence is that of Nucleotide-binding protein MLBr00563 from Mycobacterium leprae (strain Br4923).